An 83-amino-acid polypeptide reads, in one-letter code: Small ribosomal subunit protein eS27 (83 aa).

The C4-type zinc-finger motif lies at 37 to 59; sequence CSGCFKISTVFSHATTVVVCVGC.

The protein belongs to the eukaryotic ribosomal protein eS27 family. The cofactor is Zn(2+).

This is Small ribosomal subunit protein eS27 (rps-27) from Caenorhabditis elegans.